The primary structure comprises 466 residues: Alpha-1A adrenergic receptor (466 aa).

Over 1–27 (MVFLSGNASDSSNCTQPPAPVNISKAI) the chain is Extracellular. Asn7, Asn13, and Asn22 each carry an N-linked (GlcNAc...) asparagine glycan. The chain crosses the membrane as a helical span at residues 28 to 51 (LLGVILGGLILFGVLGNILVILSV). The Cytoplasmic segment spans residues 52–64 (ACHRHLHSVTHYY). Residues 65–88 (IVNLAVADLLLTSTVLPFSAIFEV) form a helical membrane-spanning segment. Topologically, residues 89-99 (LGYWAFGRVFC) are extracellular. Cys99 and Cys176 are oxidised to a cystine. Residues 100–122 (NIWAAVDVLCCTASIMGLCIISI) form a helical membrane-spanning segment. Topologically, residues 123–143 (DRYIGVSYPLRYPTIVTQRRG) are cytoplasmic. The chain crosses the membrane as a helical span at residues 144 to 167 (LMALLCVWALSLVISIGPLFGWRQ). The Extracellular segment spans residues 168-181 (PAPEDETICQINEE). The helical transmembrane segment at 182-205 (PGYVLFSALGSFYLPLAIILVMYC) threads the bilayer. The Cytoplasmic segment spans residues 206–273 (RVYVVAKRES…FSREKKAAKT (68 aa)). Position 215 is a phosphoserine; by PKA (Ser215). Residues 274-297 (LGIVVGCFVLCWLPFFLVMPIGSF) form a helical membrane-spanning segment. Topologically, residues 298-305 (FPDFKPSE) are extracellular. A helical transmembrane segment spans residues 306–329 (TVFKIVFWLGYLNSCINPIIYPCS). Over 330–466 (SQEFKKAFQN…ISLSENGEEV (137 aa)) the chain is Cytoplasmic. Residues 334-349 (KKAFQNVLRIQCLCRK) carry the Nuclear localization signal motif. The S-palmitoyl cysteine moiety is linked to residue Cys345.

This sequence belongs to the G-protein coupled receptor 1 family. Adrenergic receptor subfamily. ADRA1A sub-subfamily. In terms of assembly, homo- and heterooligomer. Heterooligomerizes with ADRA1B homooligomers in cardiac myocytes. Interacts with CAVIN4. Post-translationally, C-terminal Ser or Thr residues may be phosphorylated. In terms of tissue distribution, expressed in heart, brain, liver and prostate, but not in kidney, lung, adrenal, aorta and pituitary. Within the prostate, expressed in the apex, base, periurethral and lateral lobe. Isoform 4 is the most abundant isoform expressed in the prostate with high levels also detected in liver and heart.

Its subcellular location is the nucleus membrane. It is found in the cell membrane. The protein localises to the cytoplasm. It localises to the membrane. The protein resides in the caveola. Functionally, this alpha-adrenergic receptor mediates its action by association with G proteins that activate a phosphatidylinositol-calcium second messenger system. Its effect is mediated by G(q) and G(11) proteins. Nuclear ADRA1A-ADRA1B heterooligomers regulate phenylephrine(PE)-stimulated ERK signaling in cardiac myocytes. In Homo sapiens (Human), this protein is Alpha-1A adrenergic receptor (ADRA1A).